Here is a 98-residue protein sequence, read N- to C-terminus: NADH-ubiquinone oxidoreductase chain 4L (98 aa).

A run of 3 helical transmembrane segments spans residues 2-22, 26-46, and 59-79; these read QMTM…LLMF, FMSS…LMSI, and FPLV…SLLV.

The protein belongs to the complex I subunit 4L family. Core subunit of respiratory chain NADH dehydrogenase (Complex I) which is composed of 45 different subunits.

Its subcellular location is the mitochondrion inner membrane. It carries out the reaction a ubiquinone + NADH + 5 H(+)(in) = a ubiquinol + NAD(+) + 4 H(+)(out). Its function is as follows. Core subunit of the mitochondrial membrane respiratory chain NADH dehydrogenase (Complex I) which catalyzes electron transfer from NADH through the respiratory chain, using ubiquinone as an electron acceptor. Part of the enzyme membrane arm which is embedded in the lipid bilayer and involved in proton translocation. The polypeptide is NADH-ubiquinone oxidoreductase chain 4L (MT-ND4L) (Echinosorex gymnura (Moon rat)).